Here is a 228-residue protein sequence, read N- to C-terminus: Phosphatidylserine decarboxylase proenzyme (228 aa).

Residue Ser197 is the Schiff-base intermediate with substrate; via pyruvic acid of the active site. Residue Ser197 is modified to Pyruvic acid (Ser); by autocatalysis.

The protein belongs to the phosphatidylserine decarboxylase family. PSD-A subfamily. As to quaternary structure, heterodimer of a large membrane-associated beta subunit and a small pyruvoyl-containing alpha subunit. Pyruvate is required as a cofactor. Is synthesized initially as an inactive proenzyme. Formation of the active enzyme involves a self-maturation process in which the active site pyruvoyl group is generated from an internal serine residue via an autocatalytic post-translational modification. Two non-identical subunits are generated from the proenzyme in this reaction, and the pyruvate is formed at the N-terminus of the alpha chain, which is derived from the carboxyl end of the proenzyme. The post-translation cleavage follows an unusual pathway, termed non-hydrolytic serinolysis, in which the side chain hydroxyl group of the serine supplies its oxygen atom to form the C-terminus of the beta chain, while the remainder of the serine residue undergoes an oxidative deamination to produce ammonia and the pyruvoyl prosthetic group on the alpha chain.

Its subcellular location is the cell membrane. It carries out the reaction a 1,2-diacyl-sn-glycero-3-phospho-L-serine + H(+) = a 1,2-diacyl-sn-glycero-3-phosphoethanolamine + CO2. Its pathway is phospholipid metabolism; phosphatidylethanolamine biosynthesis; phosphatidylethanolamine from CDP-diacylglycerol: step 2/2. Its function is as follows. Catalyzes the formation of phosphatidylethanolamine (PtdEtn) from phosphatidylserine (PtdSer). The protein is Phosphatidylserine decarboxylase proenzyme of Bacteroides fragilis (strain ATCC 25285 / DSM 2151 / CCUG 4856 / JCM 11019 / LMG 10263 / NCTC 9343 / Onslow / VPI 2553 / EN-2).